Consider the following 145-residue polypeptide: D-aminoacyl-tRNA deacylase (145 aa).

The Gly-cisPro motif, important for rejection of L-amino acids motif lies at 137 to 138 (GP).

The protein belongs to the DTD family. Homodimer.

The protein resides in the cytoplasm. The catalysed reaction is glycyl-tRNA(Ala) + H2O = tRNA(Ala) + glycine + H(+). It carries out the reaction a D-aminoacyl-tRNA + H2O = a tRNA + a D-alpha-amino acid + H(+). Its function is as follows. An aminoacyl-tRNA editing enzyme that deacylates mischarged D-aminoacyl-tRNAs. Also deacylates mischarged glycyl-tRNA(Ala), protecting cells against glycine mischarging by AlaRS. Acts via tRNA-based rather than protein-based catalysis; rejects L-amino acids rather than detecting D-amino acids in the active site. By recycling D-aminoacyl-tRNA to D-amino acids and free tRNA molecules, this enzyme counteracts the toxicity associated with the formation of D-aminoacyl-tRNA entities in vivo and helps enforce protein L-homochirality. In Salmonella typhimurium (strain LT2 / SGSC1412 / ATCC 700720), this protein is D-aminoacyl-tRNA deacylase.